We begin with the raw amino-acid sequence, 575 residues long: Regulatory protein zeste (575 aa).

Gly residues predominate over residues 1-26 (MSAQGEGGGAGGSGGGGAGSDGGGNA). Disordered stretches follow at residues 1–53 (MSAQ…LPLT) and 151–174 (SVAS…VKVE). Residues 2-47 (SAQGEGGGAGGSGGGGAGSDGGGNAGQSSTGSGTVAVTNGGNSSAK) form a hydrophobic region. Polar residues predominate over residues 31–51 (TGSGTVAVTNGGNSSAKNQLP). A DNA-binding region spans residues 48–128 (NQLPLTPRFT…WLNSRLRKQY (81 aa)). Positions 151–164 (SVASAVPQQQQQQH) are enriched in low complexity.

As to quaternary structure, self-associates forming complexes of several hundred monomers.

It localises to the nucleus. Involved in transvection phenomena (= synapsis-dependent gene expression), where the synaptic pairing of chromosomes carrying genes with which zeste interacts influences the expression of these genes. Zeste binds to DNA and stimulates transcription from a nearby promoter. This Drosophila melanogaster (Fruit fly) protein is Regulatory protein zeste (z).